Reading from the N-terminus, the 513-residue chain is Ribonuclease Y (513 aa).

Residues 6–26 (YIIIAVVIIIICVILGLYVVD) form a helical membrane-spanning segment. Positions 35–59 (EASKEARRLKEEAERDAEAKKKEAI) are disordered. The KH domain maps to 203–288 (TVHVVNLPND…EMVEKAKKEV (86 aa)). The HD domain maps to 329–422 (VLKHSIEVSH…VQAADAISAA (94 aa)).

It belongs to the RNase Y family.

The protein resides in the cell membrane. Endoribonuclease that initiates mRNA decay. The protein is Ribonuclease Y of Clostridium botulinum (strain Okra / Type B1).